Consider the following 161-residue polypeptide: Zinc finger A20 and AN1 domain-containing stress-associated protein 4 (161 aa).

The segment at 10–44 (PEGHRLCVNNCGFFGSSATMNLCSNCYGDLCLKQQ) adopts an A20-type zinc-finger fold. Zn(2+) is bound by residues cysteine 16, cysteine 20, cysteine 32, and cysteine 35. The span at 76-85 (TTKKTEEKKP) shows a compositional bias: basic and acidic residues. The interval 76–99 (TTKKTEEKKPIQIPTEQPSPPQRP) is disordered. The segment at 96–142 (PQRPNRCTVCRKRVGLTGFMCRCGTTFCGSHRYPEVHGCTFDFKSAG) adopts an AN1-type zinc-finger fold. Zn(2+) contacts are provided by cysteine 102, cysteine 105, cysteine 116, cysteine 118, cysteine 123, histidine 126, histidine 132, and cysteine 134.

Functionally, may be involved in environmental stress response. The polypeptide is Zinc finger A20 and AN1 domain-containing stress-associated protein 4 (SAP4) (Arabidopsis thaliana (Mouse-ear cress)).